The following is a 916-amino-acid chain: Major intrinsically disordered Notch2-binding receptor 1 (916 aa).

Residues 1 to 891 (METSQETSLF…AEFRRAKVCK (891 aa)) lie on the Cytoplasmic side of the membrane. 5 disordered regions span residues 390 to 409 (EEKL…PAPE), 553 to 591 (KSDC…SEEE), 648 to 675 (SLTS…GPKL), 705 to 726 (TRPS…IASI), and 745 to 782 (NEEE…LPKQ). Composition is skewed to basic and acidic residues over residues 553-564 (KSDCDSSPEHNL) and 575-591 (KGDK…SEEE). The residue at position 711 (serine 711) is a Phosphoserine. Residues 750-771 (KDTGPGDNKDWHRKSKEADRQY) are compositionally biased toward basic and acidic residues. The helical transmembrane segment at 892-912 (IAALIAAAACTVILVIVVPIC) threads the bilayer. Over 913–916 (TMKS) the chain is Extracellular.

Belongs to the MINAR family. In terms of assembly, interacts with NOTCH2; this interaction increases MINAR1 stability. Interacts (via N-terminus) with DEPTOR (via PDZ domain); this interaction may stabilize DEPTOR protein by impairing its ubiquitination. In terms of tissue distribution, widely expressed, including in breast epithelial cells and endothelial cells (at protein level). Expression is down-regulated in advanced breast tumors (at protein level).

It localises to the cell membrane. In terms of biological role, intrinsically disordered protein which may negatively regulate mTOR signaling pathway by stabilizing the mTOR complex component DEPTOR. Negatively regulates angiogenesis. Negatively regulates cell growth. Negatively regulates neurite outgrowth in hippocampal neurons. The chain is Major intrinsically disordered Notch2-binding receptor 1 from Homo sapiens (Human).